Reading from the N-terminus, the 415-residue chain is uncharacterized protein (415 aa).

Disordered stretches follow at residues 329–351 and 388–415; these read KFNK…TESS and KSMM…IITL. Acidic residues predominate over residues 338–348; the sequence is LQNESGDDSET. Positions 399-409 are enriched in basic residues; it reads KSNRKSNKRSN.

This is an uncharacterized protein from Acanthamoeba polyphaga mimivirus (APMV).